The primary structure comprises 250 residues: DNA repair protein RecO (250 aa).

Belongs to the RecO family.

Functionally, involved in DNA repair and RecF pathway recombination. The polypeptide is DNA repair protein RecO (Syntrophobacter fumaroxidans (strain DSM 10017 / MPOB)).